Consider the following 556-residue polypeptide: Arginine--tRNA ligase (556 aa).

Positions valine 132–histidine 142 match the 'HIGH' region motif.

Belongs to the class-I aminoacyl-tRNA synthetase family. In terms of assembly, monomer.

Its subcellular location is the cytoplasm. The catalysed reaction is tRNA(Arg) + L-arginine + ATP = L-arginyl-tRNA(Arg) + AMP + diphosphate. The sequence is that of Arginine--tRNA ligase from Oceanobacillus iheyensis (strain DSM 14371 / CIP 107618 / JCM 11309 / KCTC 3954 / HTE831).